The sequence spans 748 residues: Catalase-peroxidase (748 aa).

The segment at residues 92–238 (WHSAGTYRIG…LAAVQMGLIY (147 aa)) is a cross-link (tryptophyl-tyrosyl-methioninium (Trp-Tyr) (with M-264)). The active-site Proton acceptor is the H93. Positions 238–264 (YVNPEGPDGNPDPIASARDIRDTFARM) form a cross-link, tryptophyl-tyrosyl-methioninium (Tyr-Met) (with W-92). A heme b-binding site is contributed by H279.

The protein belongs to the peroxidase family. Peroxidase/catalase subfamily. As to quaternary structure, homodimer or homotetramer. Heme b serves as cofactor. Formation of the three residue Trp-Tyr-Met cross-link is important for the catalase, but not the peroxidase activity of the enzyme.

It catalyses the reaction H2O2 + AH2 = A + 2 H2O. It carries out the reaction 2 H2O2 = O2 + 2 H2O. Functionally, bifunctional enzyme with both catalase and broad-spectrum peroxidase activity. The polypeptide is Catalase-peroxidase (Xanthomonas axonopodis pv. citri (strain 306)).